Here is a 283-residue protein sequence, read N- to C-terminus: Thymidylate synthase (283 aa).

Residue Arg-22 participates in dUMP binding. Residue Cys-160 is the Nucleophile of the active site. DUMP is bound by residues 180–183 (RSAD), Asn-191, and 221–223 (HIY). Position 183 (Asp-183) interacts with (6R)-5,10-methylene-5,6,7,8-tetrahydrofolate. Ser-282 contacts (6R)-5,10-methylene-5,6,7,8-tetrahydrofolate.

It belongs to the thymidylate synthase family. Bacterial-type ThyA subfamily. In terms of assembly, homodimer.

Its subcellular location is the cytoplasm. The catalysed reaction is dUMP + (6R)-5,10-methylene-5,6,7,8-tetrahydrofolate = 7,8-dihydrofolate + dTMP. It participates in pyrimidine metabolism; dTTP biosynthesis. In terms of biological role, catalyzes the reductive methylation of 2'-deoxyuridine-5'-monophosphate (dUMP) to 2'-deoxythymidine-5'-monophosphate (dTMP) while utilizing 5,10-methylenetetrahydrofolate (mTHF) as the methyl donor and reductant in the reaction, yielding dihydrofolate (DHF) as a by-product. This enzymatic reaction provides an intracellular de novo source of dTMP, an essential precursor for DNA biosynthesis. This is Thymidylate synthase from Glaesserella parasuis serovar 5 (strain SH0165) (Haemophilus parasuis).